The following is a 440-amino-acid chain: Chromosomal replication initiator protein DnaA (440 aa).

Residues 1 to 74 form a domain I, interacts with DnaA modulators region; the sequence is MNPSQILENL…VQSGNKAIIN (74 aa). Residues 74 to 99 are domain II; sequence NIQAQSTKQSNKSTKIDIAHIQAQST. A domain III, AAA+ region region spans residues 100 to 316; sequence ILNPSFTFES…GIIISLNAYA (217 aa). ATP-binding residues include Gly-146, Gly-148, Lys-149, and Thr-150. The domain IV, binds dsDNA stretch occupies residues 317-440; the sequence is TILGQEITLE…KNKILIKSQS (124 aa).

This sequence belongs to the DnaA family. Oligomerizes as a right-handed, spiral filament on DNA at oriC.

The protein localises to the cytoplasm. Plays an essential role in the initiation and regulation of chromosomal replication. ATP-DnaA binds to the origin of replication (oriC) to initiate formation of the DNA replication initiation complex once per cell cycle. Binds the DnaA box (a 9 base pair repeat at the origin) and separates the double-stranded (ds)DNA. Forms a right-handed helical filament on oriC DNA; dsDNA binds to the exterior of the filament while single-stranded (ss)DNA is stabiized in the filament's interior. The ATP-DnaA-oriC complex binds and stabilizes one strand of the AT-rich DNA unwinding element (DUE), permitting loading of DNA polymerase. After initiation quickly degrades to an ADP-DnaA complex that is not apt for DNA replication. Binds acidic phospholipids. The sequence is that of Chromosomal replication initiator protein DnaA from Campylobacter jejuni subsp. doylei (strain ATCC BAA-1458 / RM4099 / 269.97).